The chain runs to 181 residues: Probable inactive acireductone dioxygenase 2 (181 aa).

It belongs to the acireductone dioxygenase (ARD) family.

It localises to the cytoplasm. The protein localises to the nucleus. Functionally, probable inactive acireductone dioxygenase. This Sorghum bicolor (Sorghum) protein is Probable inactive acireductone dioxygenase 2.